The chain runs to 132 residues: Large ribosomal subunit protein uL14 (132 aa).

It belongs to the universal ribosomal protein uL14 family. As to quaternary structure, part of the 50S ribosomal subunit. Forms a cluster with proteins L3 and L24e, part of which may contact the 16S rRNA in 2 intersubunit bridges.

Its function is as follows. Binds to 23S rRNA. Forms part of two intersubunit bridges in the 70S ribosome. This chain is Large ribosomal subunit protein uL14, found in Methanoregula boonei (strain DSM 21154 / JCM 14090 / 6A8).